Consider the following 130-residue polypeptide: Protein ApaG (130 aa).

Positions 3–127 (RATTRKIQVT…FSLDVPHMAR (125 aa)) constitute an ApaG domain.

The protein is Protein ApaG of Azorhizobium caulinodans (strain ATCC 43989 / DSM 5975 / JCM 20966 / LMG 6465 / NBRC 14845 / NCIMB 13405 / ORS 571).